The following is a 1048-amino-acid chain: Probable beta-glucosidase E (1048 aa).

The disordered stretch occupies residues 1–54 (MPPPPFRDAPSSAKSSQRYTPLHESIPEELNDKQYSSDADSLPLSDPSDGEDDS). The Cytoplasmic segment spans residues 1-150 (MPPPPFRDAP…WRTVYYSKYW (150 aa)). A compositionally biased stretch (low complexity) spans 36–47 (SSDADSLPLSDP). The chain crosses the membrane as a helical; Signal-anchor for type II membrane protein span at residues 151–171 (WRALIGVVVVLVLLVLVFLGL). Residues 172–1048 (ARSKQVGDEL…SRDLPLHGKY (877 aa)) are Extracellular-facing. Residues asparagine 216, asparagine 224, and asparagine 410 are each glycosylated (N-linked (GlcNAc...) asparagine). Residue aspartate 438 is part of the active site. Residues asparagine 481, asparagine 520, asparagine 578, asparagine 895, and asparagine 991 are each glycosylated (N-linked (GlcNAc...) asparagine). The tract at residues 508–527 (WERPPPDGEGGPNFSSWTDD) is disordered.

Belongs to the glycosyl hydrolase 3 family.

The protein localises to the cell membrane. It carries out the reaction Hydrolysis of terminal, non-reducing beta-D-glucosyl residues with release of beta-D-glucose.. Its pathway is glycan metabolism; cellulose degradation. Its function is as follows. Beta-glucosidases are one of a number of cellulolytic enzymes involved in the degradation of cellulosic biomass. Catalyzes the last step releasing glucose from the inhibitory cellobiose. The polypeptide is Probable beta-glucosidase E (bglE) (Aspergillus oryzae (strain ATCC 42149 / RIB 40) (Yellow koji mold)).